The primary structure comprises 1304 residues: Histone-lysine N-methyltransferase met-2 (1304 aa).

Over residues 1–16 (MDQQEPSNNVDTSSIL) the composition is skewed to polar residues. The disordered stretch occupies residues 1-31 (MDQQEPSNNVDTSSILSDDGMETQEQSSFVT). Positions 97–129 (NESEQEAVAAQRRVDAEKTAKDEAELKQQEEAE) form a coiled coil. Residues 834–909 (FHRNSPIHTP…FSFDARIDTA (76 aa)) enclose the MBD domain. In terms of domain architecture, Pre-SET spans 971-1049 (SGCSCDGDCS…SCYNRVVQNN (79 aa)). 9 residues coordinate Zn(2+): Cys973, Cys975, Cys979, Cys985, Cys987, Cys1030, Cys1034, Cys1036, and Cys1041. The SET domain maps to 1052-1277 (YPMHIFKTAQ…AGDELTWDYQ (226 aa)). S-adenosyl-L-methionine-binding positions include 1062–1064 (SGW), Asp1098, and Tyr1100. Residues 1113 to 1122 (EKGREDHETD) are compositionally biased toward basic and acidic residues. Residues 1113 to 1201 (EKGREDHETD…DSMEKDNIES (89 aa)) are disordered. A compositionally biased stretch (acidic residues) spans 1128-1144 (DESDYDDEEGSDGDSGD). Over residues 1152–1165 (KRQDSSESGEETKR) the composition is skewed to basic and acidic residues. Basic residues predominate over residues 1166-1178 (LTRQKRKQSKKSG). Over residues 1182 to 1201 (SVEKDDTTPRDSMEKDNIES) the composition is skewed to basic and acidic residues. S-adenosyl-L-methionine is bound by residues Arg1231 and 1234–1235 (NH). Positions 1237, 1290, 1292, and 1297 each coordinate Zn(2+). A Post-SET domain is found at 1286–1302 (TQLTCHCGAENCTGRLL).

The protein belongs to the class V-like SAM-binding methyltransferase superfamily.

It localises to the nucleus. It is found in the chromosome. The protein localises to the cytoplasm. The catalysed reaction is N(6)-methyl-L-lysyl(9)-[histone H3] + S-adenosyl-L-methionine = N(6),N(6)-dimethyl-L-lysyl(9)-[histone H3] + S-adenosyl-L-homocysteine + H(+). The enzyme catalyses L-lysyl(9)-[histone H3] + S-adenosyl-L-methionine = N(6)-methyl-L-lysyl(9)-[histone H3] + S-adenosyl-L-homocysteine + H(+). Functionally, histone methyltransferase which is required for the mono- and dimethylation of 'Lys-9' of histone H3. This increases the efficiency of set-25-mediated trimethylation of histone H3 'Lys-9'. Involved in the transcriptional repression of lin-3 which is required for the negative regulation of vulval cell fate specification during postembryonic development. Has a role in blocking checkpoint signaling and mediating the transcriptional silencing of meiotic sex chromosome inactivation; a mechanism which enables checkpoint proteins to distinguish between the partnerless male X chromosome and asynapsed chromosomes thereby shielding the lone X from inappropriate activation of an apoptotic program. Operates redundantly with set-25 to position chromatin at the nuclear periphery. Required for small-RNA-induced H3K9 methylation. Together with set-25, protects and stabilizes repeat-rich genomic regions by suppressing transcription-induced replication stress through methylation of H3K9. Together with spr-5, required for transgenerational fertility. The sequence is that of Histone-lysine N-methyltransferase met-2 (met-2) from Caenorhabditis elegans.